Here is a 284-residue protein sequence, read N- to C-terminus: 4-diphosphocytidyl-2-C-methyl-D-erythritol kinase (284 aa).

K14 is a catalytic residue. Position 98–108 (98–108 (PMGGGLGGGSS)) interacts with ATP. D140 is a catalytic residue.

The protein belongs to the GHMP kinase family. IspE subfamily.

The catalysed reaction is 4-CDP-2-C-methyl-D-erythritol + ATP = 4-CDP-2-C-methyl-D-erythritol 2-phosphate + ADP + H(+). Its pathway is isoprenoid biosynthesis; isopentenyl diphosphate biosynthesis via DXP pathway; isopentenyl diphosphate from 1-deoxy-D-xylulose 5-phosphate: step 3/6. Its function is as follows. Catalyzes the phosphorylation of the position 2 hydroxy group of 4-diphosphocytidyl-2C-methyl-D-erythritol. The polypeptide is 4-diphosphocytidyl-2-C-methyl-D-erythritol kinase (Shewanella denitrificans (strain OS217 / ATCC BAA-1090 / DSM 15013)).